Here is a 706-residue protein sequence, read N- to C-terminus: MSENHKLSYVRNIGIGAHIDAGKTTTTERILYYTGVSYSIGEVHDGTTVMDYMKQERDRGITIQSAATTCHWIKKDDCAEQASQKEQEYKINIIDTPGHVDFTIEVGRALRVLDGMIAVFDGVAGVEPQSETVWRQADKYAVPRICFVNKMDRMGADFFRCVQMMKDRLGTKPLVIQLPIGIEDTFKGVIDLVKMKAIVWSNEDLGAKYEYHSIPNNMQAMVEDYRHQLLETVVEVDEEIFNSYVSNEDLSEEDIRKCIRKGAISGLFVPVLCGSAFKNKGVQTLLDAVVDYLPSPNDVNSIKAVDVKTEQEISRKVSVDEQFSALAFKVINDPFVGSLTFIRIYSGKLQTGSTVINTTKNQKERISRMLLMHANNRKDIKEAVAGDIVALTGLKSTTTGDTICSLDSQIILEKIEFPKPVIELAVEPKTPADQEKISAALVKLAAEDPSLVFTVDSETNQMVIKGMGELHLEIIIDRMKEEFKVEANVGAPRVAYRETITQSYTVDYTHKKQTGGAGQFARVKIIFEPLEAGAGFQFESKIVGGAIPKEFIPGVEKGLEEIKESGVVAGYPTIDFKATLIDGSFHEVDSSVLAFEIAAKNAFKEGITKAGPKLLGPIMKVEVISPNEYMGDIIGDLNSRSGVIQSMEPRGNTQIINAYVPLGQMFGYVSTLRSLSQGRAQYSMVFSHYEQVSRSIAEKIQAKDKK.

The region spanning 8-297 (SYVRNIGIGA…AVVDYLPSPN (290 aa)) is the tr-type G domain. Residues 17–24 (AHIDAGKT), 95–99 (DTPGH), and 149–152 (NKMD) each bind GTP.

The protein belongs to the TRAFAC class translation factor GTPase superfamily. Classic translation factor GTPase family. EF-G/EF-2 subfamily.

Its subcellular location is the cytoplasm. Catalyzes the GTP-dependent ribosomal translocation step during translation elongation. During this step, the ribosome changes from the pre-translocational (PRE) to the post-translocational (POST) state as the newly formed A-site-bound peptidyl-tRNA and P-site-bound deacylated tRNA move to the P and E sites, respectively. Catalyzes the coordinated movement of the two tRNA molecules, the mRNA and conformational changes in the ribosome. The chain is Elongation factor G from Orientia tsutsugamushi (strain Ikeda) (Rickettsia tsutsugamushi).